The following is a 301-amino-acid chain: Rhodopsin (301 aa).

Topologically, residues 1 to 18 are extracellular; it reads LHMIHLHWYQYPPMNPMM. Residues 19–43 traverse the membrane as a helical segment; that stretch reads YPLLLIFMLFTGILCLAGNFVTIWV. Over 44–55 the chain is Cytoplasmic; it reads FMNTKSLRTPAN. The helical transmembrane segment at 56–78 threads the bilayer; that stretch reads LLVVNLAMSDFLMMFTMFPPMMV. Over 79–92 the chain is Extracellular; that stretch reads TCYYHTWTLGPTFC. Cysteines 92 and 169 form a disulfide. The chain crosses the membrane as a helical span at residues 93–115; that stretch reads QVYAFLGNLCGCASIWTMVFITF. Residues 116–118 carry the 'Ionic lock' involved in activated form stabilization motif; the sequence is DRY. The Cytoplasmic portion of the chain corresponds to 116-134; that stretch reads DRYNVIVKGVAGEPLSTKK. The chain crosses the membrane as a helical span at residues 135-155; sequence ASLWILTIWVLSTTWCIAPFF. The Extracellular segment spans residues 156–182; it reads GWNHYVPEGNLTGCGTDYLSEDILSRS. A glycan (N-linked (GlcNAc...) asparagine) is linked at Asn165. A helical transmembrane segment spans residues 183-204; sequence YLYVYSTWVYFLPLAITIYCYV. The Cytoplasmic segment spans residues 205 to 245; the sequence is FIIKAVAAHEKGMRDQAKKMGIKSLRNEEAQKTSAECRLAK. The helical transmembrane segment at 246-267 threads the bilayer; sequence IAMTTVALWFIAWTPCLLINWV. Residues 268-278 are Extracellular-facing; that stretch reads GMFARSYLSPV. The chain crosses the membrane as a helical span at residues 279 to 300; it reads YTIWGYVFAKANAVYNPIVYAI. Lys288 carries the post-translational modification N6-(retinylidene)lysine.

This sequence belongs to the G-protein coupled receptor 1 family. Opsin subfamily. As to quaternary structure, homodimer. Interacts with GNAQ. In terms of processing, contains one covalently linked retinal chromophore.

It localises to the cell projection. Its subcellular location is the rhabdomere membrane. Its function is as follows. Photoreceptor required for image-forming vision at low light intensity. Can use both retinal and 3-dehydroretinal as visual pigment. Light-induced isomerization of 11-cis to all-trans retinal triggers a conformational change that activates signaling via G-proteins. Signaling via GNAQ probably mediates the activation of phospholipase C. The protein is Rhodopsin (RHO) of Procambarus seminolae (Crayfish).